Here is a 237-residue protein sequence, read N- to C-terminus: DNA repair protein RecO (237 aa).

Belongs to the RecO family.

In terms of biological role, involved in DNA repair and RecF pathway recombination. The protein is DNA repair protein RecO of Actinobacillus succinogenes (strain ATCC 55618 / DSM 22257 / CCUG 43843 / 130Z).